Reading from the N-terminus, the 296-residue chain is Diheme cytochrome c-type (296 aa).

Heme c-binding residues include cysteine 52, cysteine 55, histidine 56, cysteine 202, cysteine 205, and histidine 206.

Post-translationally, binds 2 heme c groups covalently per subunit.

Its subcellular location is the cell membrane. Functionally, particularly expressed when cells generate energy via aerobic respiration. The polypeptide is Diheme cytochrome c-type (cycG) (Cereibacter sphaeroides (strain ATCC 17023 / DSM 158 / JCM 6121 / CCUG 31486 / LMG 2827 / NBRC 12203 / NCIMB 8253 / ATH 2.4.1.) (Rhodobacter sphaeroides)).